Consider the following 510-residue polypeptide: P-(S)-hydroxymandelonitrile lyase (510 aa).

The N-terminal stretch at 1–34 (MAVFISSSGSPGRATATTTTTTTLLLAVLAAAAA) is a signal peptide. 116-118 (NGG) provides a ligand contact to substrate. 3 cysteine pairs are disulfide-bonded: Cys121–Cys377, Cys277–Cys289, and Cys313–Cys344. Asn172 carries N-linked (GlcNAc...) asparagine glycosylation. 212–213 (ES) is a substrate binding site. The active site involves Ser213. Asn365 is a glycosylation site (N-linked (GlcNAc...) asparagine). Active-site residues include Asp414 and His469. 465–469 (SGAGH) is a substrate binding site.

Belongs to the peptidase S10 family. As to quaternary structure, heterotetramer of two A and two B chains. The A and B chains are linked by a disulfide bond. Post-translationally, the N-terminus of chain A is blocked. In terms of tissue distribution, primary leaves of seedlings.

It catalyses the reaction (S)-4-hydroxymandelonitrile = 4-hydroxybenzaldehyde + hydrogen cyanide. In terms of biological role, involved in cyanogenesis, the release of HCN from injured tissues. Is involved in the catabolism of the cyanogenic glycoside dhurrin. This is P-(S)-hydroxymandelonitrile lyase from Sorghum bicolor (Sorghum).